Here is a 56-residue protein sequence, read N- to C-terminus: uncharacterized protein (56 aa).

This is an uncharacterized protein from Streptomyces lividans.